An 808-amino-acid chain; its full sequence is DNA ligase (808 aa).

Positions 1 to 30 (MSISDDISPVPPAPVSEPNAGQDAGQDAAP) are disordered. Over residues 18–30 (PNAGQDAGQDAAP) the composition is skewed to low complexity. Residues 61–65 (DAEYD), 110–111 (SL), and Asp141 each bind NAD(+). Lys143 serves as the catalytic N6-AMP-lysine intermediate. Positions 164, 202, 334, and 358 each coordinate NAD(+). Residues Cys453, Cys456, Cys471, and Cys476 each coordinate Zn(2+). The region spanning 644-733 (EGSGPLAGLR…GGDVPEDGDG (90 aa)) is the BRCT domain. Residues 720 to 808 (LEGRGGDVPE…PRKKDQHSLL (89 aa)) form a disordered region. The segment covering 727–742 (VPEDGDGAPGNEDEAP) has biased composition (acidic residues). Low complexity predominate over residues 746–773 (ADVPAAPEVLADAPAAISADASSGVAPG). Residues 779–792 (DRADMTDRTVRTDS) are compositionally biased toward basic and acidic residues.

Belongs to the NAD-dependent DNA ligase family. LigA subfamily. The cofactor is Mg(2+). Mn(2+) is required as a cofactor.

It catalyses the reaction NAD(+) + (deoxyribonucleotide)n-3'-hydroxyl + 5'-phospho-(deoxyribonucleotide)m = (deoxyribonucleotide)n+m + AMP + beta-nicotinamide D-nucleotide.. DNA ligase that catalyzes the formation of phosphodiester linkages between 5'-phosphoryl and 3'-hydroxyl groups in double-stranded DNA using NAD as a coenzyme and as the energy source for the reaction. It is essential for DNA replication and repair of damaged DNA. The sequence is that of DNA ligase from Nitratidesulfovibrio vulgaris (strain DSM 19637 / Miyazaki F) (Desulfovibrio vulgaris).